A 490-amino-acid polypeptide reads, in one-letter code: MEDKEDVENVDDVGYLPILFLYIAYAFIIFNGKLAEFIGKLKGERYLHTPEGYAPLFVEFEYFYQRRMYGRIKDAWDRPINSIAGAWIDVMPRASKHYSQRLELTGGKTIKCLNLGSYNYLGFAQNEGPVADKVIDSIYKYGVYTGSTSAEVGLSEPQRDLENLTARFVGKEDAIVFEMGFATNSGTLPALIGKGGLIISDSLNHASLATGCKNTGCKVKVFRHNDSKHLEEVIRESIIQGQPRTHRPWTMILIIIEGIYSMEGEVANLPEILAIKKKYKCYLYIDEAHSIGALGKTGRGIVDYYGIDPKEIDILMGTYTKSFGAIGGYVASDKSLIDHLRQSSFSQVYANSMSPVCAVQALEALRVIMGEDGTDTGAKKLKQLHDNSNYFREKIREMGFVILGNKDSPVIPLMLFNPAKLSAFSRLCLEKHIAVVVVGYPATPLTEPRTRFCISASHTIEDLDWALRQIDEIGDLITLKFHKGKYLKSK.

Residues Val10 to Phe30 form a helical membrane-spanning segment. At Lys321 the chain carries N6-(pyridoxal phosphate)lysine.

It belongs to the class-II pyridoxal-phosphate-dependent aminotransferase family. Forms a heterodimer with sptA. Pyridoxal 5'-phosphate serves as cofactor.

Its subcellular location is the endoplasmic reticulum membrane. It catalyses the reaction L-serine + hexadecanoyl-CoA + H(+) = 3-oxosphinganine + CO2 + CoA. The protein operates within lipid metabolism; sphingolipid metabolism. Catalytic subunit of serine palmitoyltransferase (SPT), which catalyzes the committed step in the synthesis of sphingolipids, the condensation of serine with palmitoyl CoA to form the long chain base 3-ketosphinganine. The sequence is that of Serine palmitoyltransferase 2 (sptB) from Dictyostelium discoideum (Social amoeba).